Here is a 457-residue protein sequence, read N- to C-terminus: Probable xyloglucan 6-xylosyltransferase 5 (457 aa).

A disordered region spans residues 1-40; the sequence is MGQDGSPAHKRPSGSGGGLPTTTLTNGGGRGGRGGLLPRG. Over 1 to 51 the chain is Cytoplasmic; that stretch reads MGQDGSPAHKRPSGSGGGLPTTTLTNGGGRGGRGGLLPRGRQMQKTFNNIK. The span at 26–37 shows a compositional bias: gly residues; the sequence is NGGGRGGRGGLL. The helical; Signal-anchor for type II membrane protein transmembrane segment at 52–72 threads the bilayer; that stretch reads ITILCGFVTILVLRGTIGVGN. The Lumenal segment spans residues 73 to 457; sequence LGSSSADAVN…RTPVETKPQN (385 aa). A disordered region spans residues 97 to 116; the sequence is RSDSDPTDLDEPQEGDMNPN. Over residues 101-110 the composition is skewed to acidic residues; that stretch reads DPTDLDEPQE. N-linked (GlcNAc...) asparagine glycosylation is found at N116 and N432.

Belongs to the glycosyltransferase 34 family. In terms of assembly, interacts with XXT2 and CSLC4. Interacts with FUT1 and XLT2. In terms of tissue distribution, highly expressed in roots, stems and cauline leaves, and at lower levels in rosette leaves, flowers and siliques.

It is found in the golgi apparatus membrane. It catalyses the reaction Transfers an alpha-D-xylosyl residue from UDP-D-xylose to a glucose residue in xyloglucan, forming an alpha-(1-&gt;6)-D-xylosyl-D-glucose linkage.. Its function is as follows. Probable xyloglucan xylosyltransferase involved in the biosynthesis of xyloglucan in roots. May act in association with XXT1 and XXT2. Associates with other xyloglucan-synthesizing enzymes to form multiprotein complexes for xyloglucan synthesis in the Golgi. This is Probable xyloglucan 6-xylosyltransferase 5 from Arabidopsis thaliana (Mouse-ear cress).